Here is a 226-residue protein sequence, read N- to C-terminus: Deoxyribose-phosphate aldolase (226 aa).

D96 serves as the catalytic Proton donor/acceptor. K157 serves as the catalytic Schiff-base intermediate with acetaldehyde. K185 functions as the Proton donor/acceptor in the catalytic mechanism.

Belongs to the DeoC/FbaB aldolase family. DeoC type 1 subfamily.

The protein localises to the cytoplasm. The enzyme catalyses 2-deoxy-D-ribose 5-phosphate = D-glyceraldehyde 3-phosphate + acetaldehyde. The protein operates within carbohydrate degradation; 2-deoxy-D-ribose 1-phosphate degradation; D-glyceraldehyde 3-phosphate and acetaldehyde from 2-deoxy-alpha-D-ribose 1-phosphate: step 2/2. In terms of biological role, catalyzes a reversible aldol reaction between acetaldehyde and D-glyceraldehyde 3-phosphate to generate 2-deoxy-D-ribose 5-phosphate. The polypeptide is Deoxyribose-phosphate aldolase (Trichormus variabilis (strain ATCC 29413 / PCC 7937) (Anabaena variabilis)).